The sequence spans 392 residues: Galactokinase (392 aa).

Residue 37 to 40 (EHTD) participates in substrate binding. ATP contacts are provided by residues S71 and 128–134 (GSGLSSS). Residues S134 and E166 each coordinate Mg(2+). D178 (proton acceptor) is an active-site residue. Y228 provides a ligand contact to substrate.

It belongs to the GHMP kinase family. GalK subfamily.

It is found in the cytoplasm. The catalysed reaction is alpha-D-galactose + ATP = alpha-D-galactose 1-phosphate + ADP + H(+). Its pathway is carbohydrate metabolism; galactose metabolism. Functionally, catalyzes the transfer of the gamma-phosphate of ATP to D-galactose to form alpha-D-galactose-1-phosphate (Gal-1-P). The chain is Galactokinase from Streptococcus pneumoniae (strain ATCC BAA-255 / R6).